Consider the following 139-residue polypeptide: Nucleoside diphosphate kinase (139 aa).

Positions 10, 58, 86, 92, 104, and 114 each coordinate ATP. The Pros-phosphohistidine intermediate role is filled by His-117.

Belongs to the NDK family. Homotetramer. The cofactor is Mg(2+).

The protein resides in the cytoplasm. It catalyses the reaction a 2'-deoxyribonucleoside 5'-diphosphate + ATP = a 2'-deoxyribonucleoside 5'-triphosphate + ADP. The enzyme catalyses a ribonucleoside 5'-diphosphate + ATP = a ribonucleoside 5'-triphosphate + ADP. Its function is as follows. Major role in the synthesis of nucleoside triphosphates other than ATP. The ATP gamma phosphate is transferred to the NDP beta phosphate via a ping-pong mechanism, using a phosphorylated active-site intermediate. The protein is Nucleoside diphosphate kinase of Mycolicibacterium smegmatis (strain ATCC 700084 / mc(2)155) (Mycobacterium smegmatis).